The primary structure comprises 244 residues: Biosynthetic peptidoglycan transglycosylase (244 aa).

Residues 26–46 (FLSYFIGLTVALTFLFRFVPI) form a helical membrane-spanning segment.

Belongs to the glycosyltransferase 51 family.

Its subcellular location is the cell inner membrane. The enzyme catalyses [GlcNAc-(1-&gt;4)-Mur2Ac(oyl-L-Ala-gamma-D-Glu-L-Lys-D-Ala-D-Ala)](n)-di-trans,octa-cis-undecaprenyl diphosphate + beta-D-GlcNAc-(1-&gt;4)-Mur2Ac(oyl-L-Ala-gamma-D-Glu-L-Lys-D-Ala-D-Ala)-di-trans,octa-cis-undecaprenyl diphosphate = [GlcNAc-(1-&gt;4)-Mur2Ac(oyl-L-Ala-gamma-D-Glu-L-Lys-D-Ala-D-Ala)](n+1)-di-trans,octa-cis-undecaprenyl diphosphate + di-trans,octa-cis-undecaprenyl diphosphate + H(+). The protein operates within cell wall biogenesis; peptidoglycan biosynthesis. Its function is as follows. Peptidoglycan polymerase that catalyzes glycan chain elongation from lipid-linked precursors. The sequence is that of Biosynthetic peptidoglycan transglycosylase from Mannheimia succiniciproducens (strain KCTC 0769BP / MBEL55E).